A 400-amino-acid polypeptide reads, in one-letter code: Nicotinate phosphoribosyltransferase (400 aa).

His-220 carries the post-translational modification Phosphohistidine; by autocatalysis.

This sequence belongs to the NAPRTase family. Post-translationally, transiently phosphorylated on a His residue during the reaction cycle. Phosphorylation strongly increases the affinity for substrates and increases the rate of nicotinate D-ribonucleotide production. Dephosphorylation regenerates the low-affinity form of the enzyme, leading to product release.

It carries out the reaction nicotinate + 5-phospho-alpha-D-ribose 1-diphosphate + ATP + H2O = nicotinate beta-D-ribonucleotide + ADP + phosphate + diphosphate. It functions in the pathway cofactor biosynthesis; NAD(+) biosynthesis; nicotinate D-ribonucleotide from nicotinate: step 1/1. Its function is as follows. Catalyzes the synthesis of beta-nicotinate D-ribonucleotide from nicotinate and 5-phospho-D-ribose 1-phosphate at the expense of ATP. This is Nicotinate phosphoribosyltransferase from Escherichia coli (strain K12 / MC4100 / BW2952).